The primary structure comprises 132 residues: Histone H2B.9 (132 aa).

Residues 1 to 11 (MAPKAEKKPAE) are compositionally biased toward basic and acidic residues. Residues 1-41 (MAPKAEKKPAEKAPAPKAEKKIAKEGGTSEIVKKKKKTKKS) are disordered. A2 carries the post-translational modification N,N,N-trimethylalanine; alternate. A2 carries the n,N-dimethylalanine; alternate modification. Residue A2 is modified to N-methylalanine; alternate. K4 is modified (N6-methyllysine). N6-acetyllysine occurs at positions 7, 12, 20, and 21. A Glycyl lysine isopeptide (Lys-Gly) (interchain with G-Cter in ubiquitin) cross-link involves residue K128.

It belongs to the histone H2B family. The nucleosome is a histone octamer containing two molecules each of H2A, H2B, H3 and H4 assembled in one H3-H4 heterotetramer and two H2A-H2B heterodimers. The octamer wraps approximately 147 bp of DNA. Post-translationally, can be acetylated to form H2BK6ac, H2BK33ac and H2BK34ac. Monoubiquitinated by BRE1 to form H2BK143ub1 and deubiquitinated by UBP26. Required for heterochromatic histone H3 di- and trimethylation at H3K4me. May give a specific tag for epigenetic transcriptional activation.

It localises to the nucleus. It is found in the chromosome. Core component of nucleosome. Nucleosomes wrap and compact DNA into chromatin, limiting DNA accessibility to the cellular machineries which require DNA as a template. Histones thereby play a central role in transcription regulation, DNA repair, DNA replication and chromosomal stability. DNA accessibility is regulated via a complex set of post-translational modifications of histones, also called histone code, and nucleosome remodeling. The protein is Histone H2B.9 of Arabidopsis thaliana (Mouse-ear cress).